Consider the following 398-residue polypeptide: KiSS-1 receptor (398 aa).

Topologically, residues 1–46 are extracellular; sequence MHTVATSGPNASWGAPANASGCPGCGANASDGPVPSPRAVDAWLVP. N-linked (GlcNAc...) asparagine glycosylation is found at N10, N18, and N28. Residues 47 to 67 form a helical membrane-spanning segment; the sequence is LFFAALMLLGLVGNSLVIYVI. The Cytoplasmic portion of the chain corresponds to 68–78; sequence CRHKPMRTVTN. The chain crosses the membrane as a helical span at residues 79–101; it reads FYIANLAATDVTFLLCCVPFTAL. At 102 to 120 the chain is on the extracellular side; the sequence is LYPLPGWVLGDFMCKFVNY. C115 and C191 form a disulfide bridge. A helical transmembrane segment spans residues 121 to 138; sequence IQQVSVQATCATLTAMSV. The Cytoplasmic portion of the chain corresponds to 139 to 157; sequence DRWYVTVFPLRALHRRTPR. The helical transmembrane segment at 158 to 178 threads the bilayer; that stretch reads LALAVSLSIWVGSAAVSAPVL. Over 179-202 the chain is Extracellular; the sequence is ALHRLSPGPRAYCSEAFPSRALER. The chain crosses the membrane as a helical span at residues 203–223; that stretch reads AFALYNLLALYLLPLLATCAC. The Cytoplasmic segment spans residues 224–263; sequence YAAMLRHLGRVAVRPAPADSALQGQVLAERAGAVRAKVSR. The helical transmembrane segment at 264–284 threads the bilayer; the sequence is LVAAVVLLFAACWGPIQLFLV. Over 285 to 305 the chain is Extracellular; it reads LQALGPAGSWHPRSYAAYALK. A helical membrane pass occupies residues 306–328; the sequence is TWAHCMSYSNSALNPLLYAFLGS. Residues 329–398 are Cytoplasmic-facing; sequence HFRQAFRRVC…CVLGEDNAPL (70 aa). Residues 341 to 363 form a disordered region; sequence APRRPRRPRRPGPSDPAAPHAEL.

Belongs to the G-protein coupled receptor 1 family. As to expression, most highly expressed in the pancreas, placenta and spinal cord, with lower-level of expression in peripheral blood leukocytes, kidney, lung, fetal liver, stomach, small intestine, testes, spleen, thymus, adrenal glands and lymph nodes. In the adult brain, expressed in the superior frontal gyrus, putamen, caudate nucleus, cingulate gyrus, nucleus accumbens, hippocampus, pons and amygdala, as well as the hypothalamus and pituitary. Expression levels are higher in early (7-9 weeks) than term placentas. Expression levels were increased in both early placentas and molar pregnancies and were reduced in choriocarcinoma cells. Expressed at higher levels in first trimester trophoblasts than at term of gestation. Also found in the extravillous trophoblast suggesting endocrine/paracrine activation mechanism.

It is found in the cell membrane. Functionally, receptor for metastin (kisspeptin-54 or kp-54), a C-terminally amidated peptide of KiSS1. KiSS1 is a metastasis suppressor protein that suppresses metastases in malignant melanomas and in some breast carcinomas without affecting tumorigenicity. The metastasis suppressor properties may be mediated in part by cell cycle arrest and induction of apoptosis in malignant cells. The receptor is essential for normal gonadotropin-released hormone physiology and for puberty. The hypothalamic KiSS1/KISS1R system is a pivotal factor in central regulation of the gonadotropic axis at puberty and in adulthood. The receptor is also probably involved in the regulation and fine-tuning of trophoblast invasion generated by the trophoblast itself. Analysis of the transduction pathways activated by the receptor identifies coupling to phospholipase C and intracellular calcium release through pertussis toxin-insensitive G(q) proteins. The protein is KiSS-1 receptor (KISS1R) of Homo sapiens (Human).